The sequence spans 227 residues: Isopentenyl-diphosphate Delta-isomerase 1 (227 aa).

Lys36 provides a ligand contact to substrate. 2 residues coordinate Mg(2+): His40 and His51. Residues 49–199 (LLHRAFSVFL…EIKITPWFKI (151 aa)) enclose the Nudix hydrolase domain. The substrate site is built by Arg70 and Lys74. Cys86 is an active-site residue. Residue Ser87 coordinates substrate. Mg(2+) is bound by residues Glu146 and Glu148. Glu148 is a catalytic residue. Residue Lys176 is modified to N6-acetyllysine. The short motif at 225–227 (YRI) is the Microbody targeting signal element.

The protein belongs to the IPP isomerase type 1 family. Monomer. Requires Mg(2+) as cofactor.

The protein localises to the peroxisome. The enzyme catalyses isopentenyl diphosphate = dimethylallyl diphosphate. It functions in the pathway isoprenoid biosynthesis; dimethylallyl diphosphate biosynthesis; dimethylallyl diphosphate from isopentenyl diphosphate: step 1/1. In terms of biological role, catalyzes the 1,3-allylic rearrangement of the homoallylic substrate isopentenyl (IPP) to its highly electrophilic allylic isomer, dimethylallyl diphosphate (DMAPP). The sequence is that of Isopentenyl-diphosphate Delta-isomerase 1 (IDI1) from Pongo abelii (Sumatran orangutan).